The primary structure comprises 830 residues: Post-transcriptional regulator MKT1 (830 aa).

Lys-4 participates in a covalent cross-link: Glycyl lysine isopeptide (Lys-Gly) (interchain with G-Cter in ubiquitin). The tract at residues 130-380 is interaction with PBP1; that stretch reads RSRGWTQWNN…SPATTVTKNA (251 aa). The interval 347–400 is disordered; the sequence is DSEKNNKDGKKSNLSSPSSASSSASPATTVTKNASEKLTYEKSSTKEVRKPRDI. Residues Ser-358, Ser-362, and Ser-371 each carry the phosphoserine modification. Residues 361–373 show a composition bias toward low complexity; the sequence is SSPSSASSSASPA. Over residues 380-400 the composition is skewed to basic and acidic residues; the sequence is ASEKLTYEKSSTKEVRKPRDI.

This sequence belongs to the XPG/RAD2 endonuclease family. As to quaternary structure, interacts (via C-terminus) with PBP1 (via C-terminus).

Its subcellular location is the cytoplasm. It is found in the cytosol. Involved in 3'-UTR mediated RNA regulation. Binds to RNA-binding and RNA regulatory proteins. Complexes with PAB1-binding protein to promote mRNA interactions with poly(A)-binding protein. Promotes mating-type switching in mother cells by positively regulating HO expression. The sequence is that of Post-transcriptional regulator MKT1 (MKT1) from Saccharomyces cerevisiae (strain ATCC 204508 / S288c) (Baker's yeast).